Reading from the N-terminus, the 265-residue chain is UDP-N-acetylenolpyruvoylglucosamine reductase (265 aa).

One can recognise an FAD-binding PCMH-type domain in the interval 15–169 (GVGGPAELWT…TRVRLKLKER (155 aa)). Arg149 is a catalytic residue. The segment at 182 to 203 (DRARKGQPKRKSAGCAFKNPPG) is disordered. The active-site Proton donor is the Cys196.

It belongs to the MurB family. Requires FAD as cofactor.

It localises to the cytoplasm. The enzyme catalyses UDP-N-acetyl-alpha-D-muramate + NADP(+) = UDP-N-acetyl-3-O-(1-carboxyvinyl)-alpha-D-glucosamine + NADPH + H(+). Its pathway is cell wall biogenesis; peptidoglycan biosynthesis. Cell wall formation. In Thermus thermophilus (strain ATCC BAA-163 / DSM 7039 / HB27), this protein is UDP-N-acetylenolpyruvoylglucosamine reductase.